The primary structure comprises 275 residues: 2,3,4,5-tetrahydropyridine-2,6-dicarboxylate N-succinyltransferase (275 aa).

Residues R104 and D141 each coordinate substrate.

It belongs to the transferase hexapeptide repeat family. As to quaternary structure, homotrimer.

It localises to the cytoplasm. It carries out the reaction (S)-2,3,4,5-tetrahydrodipicolinate + succinyl-CoA + H2O = (S)-2-succinylamino-6-oxoheptanedioate + CoA. The protein operates within amino-acid biosynthesis; L-lysine biosynthesis via DAP pathway; LL-2,6-diaminopimelate from (S)-tetrahydrodipicolinate (succinylase route): step 1/3. The sequence is that of 2,3,4,5-tetrahydropyridine-2,6-dicarboxylate N-succinyltransferase from Aeromonas hydrophila subsp. hydrophila (strain ATCC 7966 / DSM 30187 / BCRC 13018 / CCUG 14551 / JCM 1027 / KCTC 2358 / NCIMB 9240 / NCTC 8049).